A 78-amino-acid chain; its full sequence is MPRIYKVIGETTTGMKFKLEVLGEKPYDAIEKAYSLIGSRHKLSRTQIRIKDVVVISPEDASSEEVKLLMSIDKVIKY.

It belongs to the eukaryotic ribosomal protein eL20 family. In terms of assembly, part of the 50S ribosomal subunit. Binds 23S rRNA.

The polypeptide is Large ribosomal subunit protein eL20 (Pyrobaculum aerophilum (strain ATCC 51768 / DSM 7523 / JCM 9630 / CIP 104966 / NBRC 100827 / IM2)).